Reading from the N-terminus, the 143-residue chain is 6,7-dimethyl-8-ribityllumazine synthase (143 aa).

Residues phenylalanine 13, 45–47 (TFD), and 69–71 (CVI) each bind 5-amino-6-(D-ribitylamino)uracil. (2S)-2-hydroxy-3-oxobutyl phosphate is bound at residue 74-75 (ET). Histidine 77 serves as the catalytic Proton donor. Leucine 102 is a 5-amino-6-(D-ribitylamino)uracil binding site. Residue arginine 117 participates in (2S)-2-hydroxy-3-oxobutyl phosphate binding.

Belongs to the DMRL synthase family.

The catalysed reaction is (2S)-2-hydroxy-3-oxobutyl phosphate + 5-amino-6-(D-ribitylamino)uracil = 6,7-dimethyl-8-(1-D-ribityl)lumazine + phosphate + 2 H2O + H(+). It functions in the pathway cofactor biosynthesis; riboflavin biosynthesis; riboflavin from 2-hydroxy-3-oxobutyl phosphate and 5-amino-6-(D-ribitylamino)uracil: step 1/2. Catalyzes the formation of 6,7-dimethyl-8-ribityllumazine by condensation of 5-amino-6-(D-ribitylamino)uracil with 3,4-dihydroxy-2-butanone 4-phosphate. This is the penultimate step in the biosynthesis of riboflavin. This is 6,7-dimethyl-8-ribityllumazine synthase from Archaeoglobus fulgidus (strain ATCC 49558 / DSM 4304 / JCM 9628 / NBRC 100126 / VC-16).